Here is a 1468-residue protein sequence, read N- to C-terminus: ABC transporter G family member 34 (1468 aa).

The segment at 33–53 is disordered; it reads NGAFSRSSSSSSRRMRGEEDD. Residues 178 to 450 form the ABC transporter 1 domain; sequence ANALGILPTR…FELMGFKCPE (273 aa). An ATP-binding site is contributed by 211–218; that stretch reads GPPGSGKT. Residues 528-741 enclose the ABC transmembrane type-2 1 domain; the sequence is ELLKANIDRE…AQNAVSVNEF (214 aa). The next 6 membrane-spanning stretches (helical) occupy residues 546–566, 575–595, 634–654, 666–686, 690–710, and 778–798; these read FVYIFRTIQLMTVSAMAMTVF, SVADGVIFMGALFFAVMMIML, SPMSFIEVGGFCFMSYYVIGF, LLMLAVSQMAAALFRFVGGAA, IVANVFGSFMLLIFMVLGGFI, and IGFGALLGFIMLFNILFTLAL. Positions 871-1123 constitute an ABC transporter 2 domain; the sequence is LTFEDIKYSV…ELIKYFEGIQ (253 aa). 916-923 contacts ATP; sequence GVSGAGKT. The 215-residue stretch at 1196–1410 folds into the ABC transmembrane type-2 2 domain; it reads IQCLACLWKQ…TLYGLIVSQY (215 aa). A run of 7 helical transmembrane segments spans residues 1217–1237, 1247–1267, 1303–1323, 1330–1350, 1360–1380, 1387–1407, and 1440–1460; these read AIRLFFTTVIALIFGTIFWDL, LFNAMGSMYAAVLFIGVLNGQ, FPYTLVQSVIYSIIVYSMIGF, FFWYLFFMFFTLLYFTFYGMM, VASIVSSAFYAIWNLFTGFVI, VWWRWYCWICPVAWTLYGLIV, and FVAVVIVAFTMLFAFLFGFAI.

Belongs to the ABC transporter superfamily. ABCG family. PDR (TC 3.A.1.205) subfamily.

The protein resides in the membrane. Functionally, may be a general defense protein. The polypeptide is ABC transporter G family member 34 (Oryza sativa subsp. japonica (Rice)).